A 434-amino-acid polypeptide reads, in one-letter code: Tryptophan synthase beta chain 2 (434 aa).

K110 is modified (N6-(pyridoxal phosphate)lysine).

It belongs to the TrpB family. In terms of assembly, tetramer of two alpha and two beta chains. Pyridoxal 5'-phosphate is required as a cofactor.

The enzyme catalyses (1S,2R)-1-C-(indol-3-yl)glycerol 3-phosphate + L-serine = D-glyceraldehyde 3-phosphate + L-tryptophan + H2O. It participates in amino-acid biosynthesis; L-tryptophan biosynthesis; L-tryptophan from chorismate: step 5/5. Functionally, the beta subunit is responsible for the synthesis of L-tryptophan from indole and L-serine. The sequence is that of Tryptophan synthase beta chain 2 (trpB2) from Aquifex aeolicus (strain VF5).